Consider the following 181-residue polypeptide: ATP-dependent protease subunit HslV (181 aa).

Thr-9 is a catalytic residue. Na(+) is bound by residues Gly-164, Cys-167, and Thr-170.

Belongs to the peptidase T1B family. HslV subfamily. As to quaternary structure, a double ring-shaped homohexamer of HslV is capped on each side by a ring-shaped HslU homohexamer. The assembly of the HslU/HslV complex is dependent on binding of ATP.

The protein localises to the cytoplasm. It catalyses the reaction ATP-dependent cleavage of peptide bonds with broad specificity.. With respect to regulation, allosterically activated by HslU binding. In terms of biological role, protease subunit of a proteasome-like degradation complex believed to be a general protein degrading machinery. This chain is ATP-dependent protease subunit HslV, found in Gemmatimonas aurantiaca (strain DSM 14586 / JCM 11422 / NBRC 100505 / T-27).